We begin with the raw amino-acid sequence, 617 residues long: Acetolactate synthase large subunit (617 aa).

Glu-71 lines the thiamine diphosphate pocket. Residues Arg-173, 281-302 (HGTA…VGAR), and 324-343 (EIDP…VLGD) each bind FAD. The tract at residues 413–492 (QHQMWAAQHL…VKVVIVNNHW (80 aa)) is thiamine pyrophosphate binding. Positions 463 and 490 each coordinate Mg(2+).

This sequence belongs to the TPP enzyme family. Dimer of large and small chains. It depends on Mg(2+) as a cofactor. The cofactor is thiamine diphosphate.

The catalysed reaction is 2 pyruvate + H(+) = (2S)-2-acetolactate + CO2. It functions in the pathway amino-acid biosynthesis; L-isoleucine biosynthesis; L-isoleucine from 2-oxobutanoate: step 1/4. It participates in amino-acid biosynthesis; L-valine biosynthesis; L-valine from pyruvate: step 1/4. The chain is Acetolactate synthase large subunit (ilvB) from Parasynechococcus marenigrum (strain WH8102).